We begin with the raw amino-acid sequence, 201 residues long: MNKTNDNDIDQLIYLFSKLPGLGSRSARRIVLYLLQDKDVRLKSLINNLVEIDKKIVKCEICGNMDTENICCICSSEYRDKSVIAVVETVAELWAMERSSNFKGLYHVLGHNLSAASRQNPSILRLPELLKRCFAENIKEVIIATNSTLEGQTTAYFITEYLREHPAKISRLASGIPIGGELDYLDEGTLSAAINLRQPFE.

Residues 59-74 (CEICGNMDTENICCIC) form a C4-type zinc finger. The 96-residue stretch at 82-177 (SVIAVVETVA…KISRLASGIP (96 aa)) folds into the Toprim domain.

It belongs to the RecR family.

May play a role in DNA repair. It seems to be involved in an RecBC-independent recombinational process of DNA repair. It may act with RecF and RecO. This is Recombination protein RecR from Rickettsia felis (strain ATCC VR-1525 / URRWXCal2) (Rickettsia azadi).